Reading from the N-terminus, the 233-residue chain is Mediator of RNA polymerase II transcription subunit 7 (233 aa).

Residue lysine 185 forms a Glycyl lysine isopeptide (Lys-Gly) (interchain with G-Cter in SUMO1); alternate linkage. Residue lysine 185 forms a Glycyl lysine isopeptide (Lys-Gly) (interchain with G-Cter in SUMO2); alternate linkage. Positions 187-213 are disordered; that stretch reads EPMDADDSNNCTGQNEHQRENSGHRRD. A Phosphoserine modification is found at serine 194. Positions 202–213 are enriched in basic and acidic residues; that stretch reads EHQRENSGHRRD.

The protein belongs to the Mediator complex subunit 7 family. Component of the Mediator complex, which is composed of MED1, MED4, MED6, MED7, MED8, MED9, MED10, MED11, MED12, MED13, MED13L, MED14, MED15, MED16, MED17, MED18, MED19, MED20, MED21, MED22, MED23, MED24, MED25, MED26, MED27, MED29, MED30, MED31, CCNC, CDK8 and CDC2L6/CDK11. The MED12, MED13, CCNC and CDK8 subunits form a distinct module termed the CDK8 module. Mediator containing the CDK8 module is less active than Mediator lacking this module in supporting transcriptional activation. Individual preparations of the Mediator complex lacking one or more distinct subunits have been variously termed ARC, CRSP, DRIP, PC2, SMCC and TRAP. In terms of processing, constitutively sumoylated.

The protein resides in the nucleus. In terms of biological role, component of the Mediator complex, a coactivator involved in the regulated transcription of nearly all RNA polymerase II-dependent genes. Mediator functions as a bridge to convey information from gene-specific regulatory proteins to the basal RNA polymerase II transcription machinery. Mediator is recruited to promoters by direct interactions with regulatory proteins and serves as a scaffold for the assembly of a functional preinitiation complex with RNA polymerase II and the general transcription factors. The chain is Mediator of RNA polymerase II transcription subunit 7 (MED7) from Homo sapiens (Human).